We begin with the raw amino-acid sequence, 294 residues long: Phenylalanine-4-hydroxylase (294 aa).

The segment at 1–20 (MSGDGLSNGPPPGARPDWTI) is disordered. Fe cation contacts are provided by histidine 129, histidine 134, and glutamate 175.

The protein belongs to the biopterin-dependent aromatic amino acid hydroxylase family. The cofactor is Fe(2+).

It catalyses the reaction (6R)-L-erythro-5,6,7,8-tetrahydrobiopterin + L-phenylalanine + O2 = (4aS,6R)-4a-hydroxy-L-erythro-5,6,7,8-tetrahydrobiopterin + L-tyrosine. The protein operates within amino-acid degradation; L-phenylalanine degradation; acetoacetate and fumarate from L-phenylalanine: step 1/6. This is Phenylalanine-4-hydroxylase (phhA) from Caulobacter vibrioides (strain ATCC 19089 / CIP 103742 / CB 15) (Caulobacter crescentus).